A 276-amino-acid polypeptide reads, in one-letter code: Dermonecrotic toxin LlSicTox-alphaIV2i (276 aa).

H5 is an active-site residue. Positions 25 and 27 each coordinate Mg(2+). The active-site Nucleophile is H41. 2 disulfide bridges follow: C45–C51 and C47–C193. D85 is a Mg(2+) binding site.

This sequence belongs to the arthropod phospholipase D family. Class II subfamily. Mg(2+) is required as a cofactor. Expressed by the venom gland.

It localises to the secreted. It carries out the reaction an N-(acyl)-sphingosylphosphocholine = an N-(acyl)-sphingosyl-1,3-cyclic phosphate + choline. The enzyme catalyses an N-(acyl)-sphingosylphosphoethanolamine = an N-(acyl)-sphingosyl-1,3-cyclic phosphate + ethanolamine. It catalyses the reaction a 1-acyl-sn-glycero-3-phosphocholine = a 1-acyl-sn-glycero-2,3-cyclic phosphate + choline. The catalysed reaction is a 1-acyl-sn-glycero-3-phosphoethanolamine = a 1-acyl-sn-glycero-2,3-cyclic phosphate + ethanolamine. Dermonecrotic toxins cleave the phosphodiester linkage between the phosphate and headgroup of certain phospholipids (sphingolipid and lysolipid substrates), forming an alcohol (often choline) and a cyclic phosphate. This toxin acts on sphingomyelin (SM). It may also act on ceramide phosphoethanolamine (CPE), lysophosphatidylcholine (LPC) and lysophosphatidylethanolamine (LPE), but not on lysophosphatidylserine (LPS), and lysophosphatidylglycerol (LPG). It acts by transphosphatidylation, releasing exclusively cyclic phosphate products as second products. Induces dermonecrosis, hemolysis, increased vascular permeability, edema, inflammatory response, and platelet aggregation. In Loxosceles laeta (South American recluse spider), this protein is Dermonecrotic toxin LlSicTox-alphaIV2i.